Reading from the N-terminus, the 524-residue chain is Ribonuclease Y (524 aa).

Residues 3-23 traverse the membrane as a helical segment; that stretch reads IVINLFLIIFASVVFFAAGFF. Positions 214–274 constitute a KH domain; the sequence is ALSVVHIQSD…LRREHAKLTL (61 aa). In terms of domain architecture, HD spans 340–432; it reads LLQHSREVAM…VDAANVISLA (93 aa).

The protein belongs to the RNase Y family.

It localises to the cell membrane. In terms of biological role, endoribonuclease that initiates mRNA decay. This is Ribonuclease Y from Chlorobium luteolum (strain DSM 273 / BCRC 81028 / 2530) (Pelodictyon luteolum).